Here is a 793-residue protein sequence, read N- to C-terminus: PC3-like endoprotease variant A (793 aa).

The N-terminal stretch at 1-29 is a signal peptide; the sequence is MNYRGIYRRRYVFVLLLLVAVVNISYGWT. The propeptide occupies 30–152; the sequence is VLKNKDYKRR…QQKILERVKR (123 aa). N-linked (GlcNAc...) asparagine glycosylation is found at Asn62 and Asn190. The Peptidase S8 domain maps to 164 to 486; it reads MWYLLNTGQA…FGRLDANAMV (323 aa). Active-site charge relay system residues include Asp202 and His242. Intrachain disulfides connect Cys259-Cys411 and Cys351-Cys381. Ser419 serves as the catalytic Charge relay system. Positions 495–638 constitute a P/Homo B domain; the sequence is LPAQRKCTAA…EERVIDTQTK (144 aa). A disulfide bridge links Cys501 with Cys527.

This sequence belongs to the peptidase S8 family. Furin subfamily. In terms of tissue distribution, predominantly in the body column.

Probably involved in the processing of hormone and other protein precursors at sites comprised of pairs of basic amino acid residues. In Hydra vulgaris (Hydra), this protein is PC3-like endoprotease variant A.